The sequence spans 527 residues: AAA ATPase forming ring-shaped complexes (527 aa).

Positions 1–18 are enriched in low complexity; the sequence is MVTMSSPTDSSPSNSFSD. Residues 1 to 38 form a disordered region; it reads MVTMSSPTDSSPSNSFSDFNREEQSRLSDEVRQLKRTN. Positions 19 to 33 are enriched in basic and acidic residues; sequence FNREEQSRLSDEVRQ. Positions 21 to 53 form a coiled coil; the sequence is REEQSRLSDEVRQLKRTNSDLGARNAKLAEMLK. Residue 257-262 participates in ATP binding; it reads GCGKTL. A disordered region spans residues 492–515; sequence DENQQSEDLPNTSNPDEWSRITGR. Residues 497–507 are compositionally biased toward polar residues; the sequence is SEDLPNTSNPD.

Belongs to the AAA ATPase family. As to quaternary structure, homohexamer. Assembles into a hexameric ring structure.

This chain is AAA ATPase forming ring-shaped complexes, found in Corynebacterium glutamicum (strain R).